The sequence spans 142 residues: Coactosin-like protein (142 aa).

The residue at position 2 (Ala-2) is an N-acetylalanine. An ADF-H domain is found at 2–130; sequence ATKIDKEACR…EEDFIRSELK (129 aa). Ser-23 carries the phosphoserine modification. The segment at 66 to 75 is flexible and important for F-actin binding; the sequence is TGDAMSKRSK. Lys-102 carries the post-translational modification N6-acetyllysine. A Phosphoserine modification is found at Ser-141.

This sequence belongs to the actin-binding proteins ADF family. Coactosin subfamily. Interacts with 5-lipoxygenase (ALOX5/5LO) in a calcium-independent manner. Binds to F-actin with a stoichiometry of 1:2.

It localises to the cytoplasm. The protein localises to the cytoskeleton. Its subcellular location is the nucleus. Binds to F-actin in a calcium-independent manner. Has no direct effect on actin depolymerization. Acts as a chaperone for ALOX5 (5LO), influencing both its stability and activity in leukotrienes synthesis. The protein is Coactosin-like protein of Rattus norvegicus (Rat).